Consider the following 408-residue polypeptide: Peptidase T (408 aa).

H78 is a Zn(2+) binding site. The active site involves D80. D140 lines the Zn(2+) pocket. The active-site Proton acceptor is E174. E175, D197, and H379 together coordinate Zn(2+).

This sequence belongs to the peptidase M20B family. It depends on Zn(2+) as a cofactor.

Its subcellular location is the cytoplasm. It catalyses the reaction Release of the N-terminal residue from a tripeptide.. Cleaves the N-terminal amino acid of tripeptides. The polypeptide is Peptidase T (Staphylococcus aureus (strain Mu3 / ATCC 700698)).